A 249-amino-acid chain; its full sequence is 4-hydroxy-tetrahydrodipicolinate reductase (249 aa).

NAD(+) is bound by residues Asp32, 74 to 76 (GTT), and 99 to 102 (SANF). His134 functions as the Proton donor/acceptor in the catalytic mechanism. His135 provides a ligand contact to (S)-2,3,4,5-tetrahydrodipicolinate. The active-site Proton donor is Lys138. A (S)-2,3,4,5-tetrahydrodipicolinate-binding site is contributed by 144-145 (GT).

It belongs to the DapB family.

Its subcellular location is the cytoplasm. It catalyses the reaction (S)-2,3,4,5-tetrahydrodipicolinate + NAD(+) + H2O = (2S,4S)-4-hydroxy-2,3,4,5-tetrahydrodipicolinate + NADH + H(+). The catalysed reaction is (S)-2,3,4,5-tetrahydrodipicolinate + NADP(+) + H2O = (2S,4S)-4-hydroxy-2,3,4,5-tetrahydrodipicolinate + NADPH + H(+). Its pathway is amino-acid biosynthesis; L-lysine biosynthesis via DAP pathway; (S)-tetrahydrodipicolinate from L-aspartate: step 4/4. In terms of biological role, catalyzes the conversion of 4-hydroxy-tetrahydrodipicolinate (HTPA) to tetrahydrodipicolinate. In Chlorobaculum parvum (strain DSM 263 / NCIMB 8327) (Chlorobium vibrioforme subsp. thiosulfatophilum), this protein is 4-hydroxy-tetrahydrodipicolinate reductase.